A 410-amino-acid chain; its full sequence is Elongation factor Tu, apicoplast (410 aa).

One can recognise a tr-type G domain in the interval 10–214 (KQHINLGTIG…QIIDNIIIPT (205 aa)). Positions 19–26 (GHVDHGKT) are G1. 19–26 (GHVDHGKT) contributes to the GTP binding site. Thr-26 is a binding site for Mg(2+). The segment at 60–64 (GITIN) is G2. The tract at residues 81-84 (DCPG) is G3. GTP contacts are provided by residues 81–85 (DCPGH) and 136–139 (NKED). The segment at 136-139 (NKED) is G4. Residues 174–176 (SAL) form a G5 region.

The protein belongs to the TRAFAC class translation factor GTPase superfamily. Classic translation factor GTPase family. EF-Tu/EF-1A subfamily.

It localises to the plastid. Its subcellular location is the apicoplast. The catalysed reaction is GTP + H2O = GDP + phosphate + H(+). In terms of biological role, GTP hydrolase that promotes the GTP-dependent binding of aminoacyl-tRNA to the A-site of ribosomes during protein biosynthesis. The protein is Elongation factor Tu, apicoplast (tufA) of Plasmodium falciparum (isolate 3D7).